The following is a 341-amino-acid chain: 2-keto-4-carboxy-3-hexenedioate hydratase (341 aa).

Zn(2+) contacts are provided by His-8 and His-10. A substrate-binding site is contributed by 71-73 (RAS). His-178 is a Zn(2+) binding site. The substrate site is built by Tyr-194 and His-223. Catalysis depends on Glu-284, which acts as the Proton donor/acceptor. Arg-290 serves as a coordination point for substrate.

It belongs to the metallo-dependent hydrolases superfamily. As to quaternary structure, homodimer. The cofactor is Zn(2+).

The enzyme catalyses (3Z)-2-oxo-4-carboxy-3-hexenedioate + H2O = (2S)-2-hydroxy-4-oxobutane-1,2,4-tricarboxylate. It participates in secondary metabolite metabolism; lignin degradation. Contributes to the degradation of lignin at the level of the protocatechuate 4,5-cleavage pathway. Catalyzes the hydration of the double bond of (3Z)-2-keto-4-carboxy-3-hexenedioate (KCH) to (4S)-4-carboxy-4-hydroxy-2-oxoadipate (CHA, also named (2S)-2-hydroxy-4-oxobutane-1,2,4-tricarboxylate). Is involved in the catabolism of both vanillate and syringate. The sequence is that of 2-keto-4-carboxy-3-hexenedioate hydratase from Sphingobium sp. (strain NBRC 103272 / SYK-6).